Consider the following 279-residue polypeptide: Replication protein A 32 kDa subunit A (279 aa).

The tract at residues 1 to 33 (MFSSSQFEPNSGFSGGGFMSSQPSQAYESSSST) is disordered. Over residues 19–32 (MSSQPSQAYESSSS) the composition is skewed to low complexity. The segment at residues 73–148 (VSLVGLVCDK…QLLVFSVRPI (76 aa)) is a DNA-binding region (OB).

It belongs to the replication factor A protein 2 family. In terms of assembly, heterotrimer of RPA1, RPA2 and RPA3 (canonical replication protein A complex). Interacts with ROS1. Binds to ASE1/At3g02920, PDX2, At5g62350, RPA1A/At2g06510, ARF1/At1g10630, At4g18590 and At3g52630. Post-translationally, phosphorylated in a cell-cycle-dependent manner (from the S phase until mitosis). In response to DNA damage, recruited to DNA-repair nuclear foci, as a hypophosphorylated form. As to expression, strongly expressed in shoot and root meristems. Present in seedlings, roots, leaves, siliques and flowers.

The protein resides in the nucleus. Component of the replication protein A complex (RPA) required for DNA recombination, repair and replication. The activity of RPA is mediated by single-stranded DNA binding and protein interactions. Required fo cell division in meristems. Involved in the maintenance of transcriptional epigenetic gene silencing (TGS) at specific loci (including some transposons) by regulating histone H3 acetylation, 'Lys-4' and 'Lys-9' methylation. This Arabidopsis thaliana (Mouse-ear cress) protein is Replication protein A 32 kDa subunit A (RPA2A).